Here is a 374-residue protein sequence, read N- to C-terminus: Glutamine synthetase (374 aa).

A required for glutamine-induced ubiquitination by CRL4(CRBN) and proteasomal degradation region spans residues 2–25 (TTSASSHLNKGIKQVYMSLPQGEK). Residues lysine 11 and lysine 14 each carry the N6-acetyllysine modification. Residues 24–106 (EKVQAMYIWI…VLCESFQVQF (83 aa)) form the GS beta-grasp domain. Positions 114–374 (LRHTCKRIMD…TGDEPFQYKN (261 aa)) constitute a GS catalytic domain. ATP is bound at residue glutamate 135. Mn(2+)-binding residues include glutamate 135, glutamate 137, glutamate 197, and glutamate 204. Residue 204–209 (EFQIGP) participates in ATP binding. 247 to 248 (NW) lines the L-glutamate pocket. Histidine 254 contributes to the Mn(2+) binding site. ATP contacts are provided by residues 256 to 258 (NFS), arginine 320, and arginine 325. Position 320 (arginine 320) interacts with L-glutamate. 337 to 339 (YFE) provides a ligand contact to ADP. Position 339 (glutamate 339) interacts with Mn(2+). Arginine 341 provides a ligand contact to L-glutamate. Residue serine 344 is modified to Phosphoserine.

The protein belongs to the glutamine synthetase family. In terms of assembly, decamer; composed of two pentamers. Interacts with PALMD. Interacts with RHOJ. Interacts with BEST2; this interaction tethers a fraction of GLUL to the membrane, causing a decrease of cytosolic glutamine synthase (GS) activity and inhibits the chloride channel activity of BEST2 by affecting the gating at the aperture in the absence of intracellular glutamate. Mg(2+) serves as cofactor. It depends on Mn(2+) as a cofactor. In terms of processing, palmitoylated; undergoes autopalmitoylation. Post-translationally, acetylated by EP300/p300; acetylation is stimulated by increased glutamine levels and promotes ubiquitin-mediated proteasomal degradation. Ubiquitinated by ZNRF1. Ubiquitinated by the DCX (DDB1-CUL4-X-box) E3 ubiquitin-protein ligase complex called CRL4(CRBN), leading to proteasomal degradation.

It is found in the cytoplasm. The protein localises to the cytosol. Its subcellular location is the microsome. It localises to the mitochondrion. The protein resides in the cell membrane. It catalyses the reaction L-glutamate + NH4(+) + ATP = L-glutamine + ADP + phosphate + H(+). The enzyme catalyses L-cysteinyl-[protein] + hexadecanoyl-CoA = S-hexadecanoyl-L-cysteinyl-[protein] + CoA. Its activity is regulated as follows. Glutamine synthetase activity is inhibited by methionine sulfoximine (MSO). Glutamine synthetase that catalyzes the ATP-dependent conversion of glutamate and ammonia to glutamine. Its role depends on tissue localization: in the brain, it regulates the levels of toxic ammonia and converts neurotoxic glutamate to harmless glutamine, whereas in the liver, it is one of the enzymes responsible for the removal of ammonia. Plays a key role in ammonium detoxification during erythropoiesis: the glutamine synthetase activity is required to remove ammonium generated by porphobilinogen deaminase (HMBS) during heme biosynthesis to prevent ammonium accumulation and oxidative stress. Essential for proliferation of fetal skin fibroblasts. Independently of its glutamine synthetase activity, required for endothelial cell migration during vascular development. Involved in angiogenesis by regulating membrane localization and activation of the GTPase RHOJ, possibly by promoting RHOJ palmitoylation. May act as a palmitoyltransferase for RHOJ: able to autopalmitoylate and then transfer the palmitoyl group to RHOJ. Plays a role in ribosomal 40S subunit biogenesis. Through the interaction with BEST2, inhibits BEST2 channel activity by affecting the gating at the aperture in the absence of intracellular L-glutamate, but sensitizes BEST2 to intracellular L-glutamate, which promotes the opening of BEST2 and thus relieves its inhibitory effect on BEST2. The polypeptide is Glutamine synthetase (Macaca fascicularis (Crab-eating macaque)).